The chain runs to 397 residues: Succinate--CoA ligase [ADP-forming] subunit beta (397 aa).

Residues 9 to 254 form the ATP-grasp domain; it reads KALLKSFGAP…KSEEDEKEIQ (246 aa). ATP is bound by residues lysine 46, 53-55, glutamate 109, alanine 112, and glutamate 117; that span reads GRG. Mg(2+) contacts are provided by asparagine 209 and aspartate 223. Substrate is bound by residues asparagine 274 and 331–333; that span reads GIM.

The protein belongs to the succinate/malate CoA ligase beta subunit family. As to quaternary structure, heterotetramer of two alpha and two beta subunits. Requires Mg(2+) as cofactor.

It carries out the reaction succinate + ATP + CoA = succinyl-CoA + ADP + phosphate. The catalysed reaction is GTP + succinate + CoA = succinyl-CoA + GDP + phosphate. It functions in the pathway carbohydrate metabolism; tricarboxylic acid cycle; succinate from succinyl-CoA (ligase route): step 1/1. Its function is as follows. Succinyl-CoA synthetase functions in the citric acid cycle (TCA), coupling the hydrolysis of succinyl-CoA to the synthesis of either ATP or GTP and thus represents the only step of substrate-level phosphorylation in the TCA. The beta subunit provides nucleotide specificity of the enzyme and binds the substrate succinate, while the binding sites for coenzyme A and phosphate are found in the alpha subunit. The chain is Succinate--CoA ligase [ADP-forming] subunit beta from Rhizobium rhizogenes (strain K84 / ATCC BAA-868) (Agrobacterium radiobacter).